The chain runs to 90 residues: SAGA-associated factor 11 (90 aa).

The segment at 63 to 84 adopts an SGF11-type zinc-finger fold; the sequence is FSCDNCGRKIAGGRFAQHINKC.

The protein belongs to the SGF11 family. Component of the 1.8 MDa SAGA transcription coactivator-HAT complex. SAGA is built of 5 distinct domains with specialized functions. Within the SAGA complex, SUS1, SGF11, SGF73 and UBP8 form an additional subcomplex of SAGA called the DUB module (deubiquitination module). Interacts directly with SGF73, SUS1 and UBP8.

It is found in the nucleus. Functions as a component of the transcription regulatory histone acetylation (HAT) complex SAGA. At the promoters, SAGA is required for recruitment of the basal transcription machinery. It influences RNA polymerase II transcriptional activity through different activities such as TBP interaction and promoter selectivity, interaction with transcription activators, and chromatin modification through histone acetylation and deubiquitination. SAGA acetylates nucleosomal histone H3 to some extent (to form H3K9ac, H3K14ac, H3K18ac and H3K23ac). SAGA interacts with DNA via upstream activating sequences (UASs). Involved in transcriptional regulation of a subset of SAGA-regulated genes. Within the SAGA complex, participates in a subcomplex, that specifically deubiquitinates histones H2B. The sequence is that of SAGA-associated factor 11 from Lodderomyces elongisporus (strain ATCC 11503 / CBS 2605 / JCM 1781 / NBRC 1676 / NRRL YB-4239) (Yeast).